Consider the following 149-residue polypeptide: Alpha-crystallin A chain (149 aa).

A sHSP domain is found at 41-149 (LFRSVLESGI…DPSHSERPIP (109 aa)). The Zn(2+) site is built by His-89, Glu-91, His-96, and His-143.

This sequence belongs to the small heat shock protein (HSP20) family. Heteropolymer composed of three CRYAA and one CRYAB subunits. Inter-subunit bridging via zinc ions enhances stability, which is crucial as there is no protein turn over in the lens. Can also form homodimers and homotetramers (dimers of dimers) which serve as the building blocks of homooligomers. Within homooligomers, the zinc-binding motif is created from residues of 3 different molecules. His-89 and Glu-91 from one molecule are ligands of the zinc ion, and His-96 and His-143 residues from additional molecules complete the site with tetrahedral coordination geometry.

It localises to the cytoplasm. It is found in the nucleus. Its function is as follows. Contributes to the transparency and refractive index of the lens. May act as a chaperone, preventing aggregation of various proteins under a wide range of stress conditions. The polypeptide is Alpha-crystallin A chain (CRYAA) (Eudromia elegans (Elegant crested-tinamou)).